We begin with the raw amino-acid sequence, 637 residues long: Nuclear receptor subfamily 2 group C member 1-A (637 aa).

Residues 149–224 constitute a DNA-binding region (nuclear receptor); the sequence is VELCVVCGDK…LGMKQDSVQC (76 aa). 2 consecutive NR C4-type zinc fingers follow at residues 152–172 and 188–207; these read CVVC…CEGC and CRGS…CQYC. The NR LBD domain maps to 383 to 624; the sequence is CLGSNANLLH…SIIPYILRME (242 aa).

Belongs to the nuclear hormone receptor family. NR2 subfamily.

Its subcellular location is the nucleus. Its function is as follows. Orphan nuclear receptor. Binds the IR7 element in the promoter of its own gene in an autoregulatory negative feedback mechanism. Primarily repressor of a broad range of genes. Binds to hormone response elements (HREs) consisting of two 5'-AGGTCA-3' half site direct repeat consensus sequences. The sequence is that of Nuclear receptor subfamily 2 group C member 1-A (nr2c1-a) from Xenopus laevis (African clawed frog).